Consider the following 780-residue polypeptide: Pendrin (780 aa).

The Cytoplasmic segment spans residues methionine 1–aspartate 87. The helical transmembrane segment at isoleucine 88–leucine 108 threads the bilayer. Alanine 109 is a topological domain (extracellular). Residues alanine 110–phenylalanine 130 traverse the membrane as a helical segment. The Cytoplasmic portion of the chain corresponds to glycine 131–histidine 135. Residues isoleucine 136–alanine 156 form a helical membrane-spanning segment. Topologically, residues proline 157–threonine 191 are extracellular. The chain crosses the membrane as a helical span at residues leucine 192–valine 212. Residues arginine 213 to proline 218 lie on the Cytoplasmic side of the membrane. The helical transmembrane segment at leucine 219–valine 239 threads the bilayer. The Extracellular portion of the chain corresponds to leucine 240–asparagine 263. Residues isoleucine 264 to alanine 284 form a helical membrane-spanning segment. At valine 285–lysine 295 the chain is on the cytoplasmic side. A helical membrane pass occupies residues isoleucine 296–glycine 316. The Extracellular portion of the chain corresponds to alanine 317–glycine 344. The chain crosses the membrane as a helical span at residues leucine 345 to valine 365. The Cytoplasmic portion of the chain corresponds to serine 366–glutamate 384. The helical transmembrane segment at phenylalanine 385–threonine 405 threads the bilayer. Topologically, residues alanine 406–glutamine 421 are extracellular. A helical membrane pass occupies residues valine 422 to leucine 442. The Cytoplasmic segment spans residues glutamate 443 to serine 448. A helical membrane pass occupies residues valine 449–proline 469. Over arginine 470–cysteine 486 the chain is Extracellular. A helical membrane pass occupies residues isoleucine 487–leucine 507. Residues threonine 508–serine 780 lie on the Cytoplasmic side of the membrane. An STAS domain is found at histidine 535–leucine 729.

The protein belongs to the SLC26A/SulP transporter (TC 2.A.53) family. As to expression, highly expressed in the kidney (at protein level).

Its subcellular location is the cell membrane. The protein localises to the apical cell membrane. The enzyme catalyses chloride(in) = chloride(out). It catalyses the reaction iodide(out) = iodide(in). The catalysed reaction is hydrogencarbonate(in) + chloride(out) = hydrogencarbonate(out) + chloride(in). It carries out the reaction iodide(in) + hydrogencarbonate(out) = iodide(out) + hydrogencarbonate(in). The enzyme catalyses iodide(in) + chloride(out) = iodide(out) + chloride(in). It catalyses the reaction formate(in) + chloride(out) = formate(out) + chloride(in). In terms of biological role, sodium-independent transporter of chloride and iodide. Mediates electroneutral chloride-bicarbonate and chloride-formate exchange with 1:1 stoichiometry. Mediates electroneutral iodide-chloride and iodide-bicarbonate exchange. The sequence is that of Pendrin (Slc26a4) from Rattus norvegicus (Rat).